Consider the following 503-residue polypeptide: ATP synthase subunit alpha (503 aa).

An ATP-binding site is contributed by 169–176 (GDRSTGKT).

Belongs to the ATPase alpha/beta chains family. In terms of assembly, F-type ATPases have 2 components, CF(1) - the catalytic core - and CF(0) - the membrane proton channel. CF(1) has five subunits: alpha(3), beta(3), gamma(1), delta(1), epsilon(1). CF(0) has three main subunits: a(1), b(2) and c(9-12). The alpha and beta chains form an alternating ring which encloses part of the gamma chain. CF(1) is attached to CF(0) by a central stalk formed by the gamma and epsilon chains, while a peripheral stalk is formed by the delta and b chains.

The protein localises to the cell membrane. It catalyses the reaction ATP + H2O + 4 H(+)(in) = ADP + phosphate + 5 H(+)(out). Functionally, produces ATP from ADP in the presence of a proton gradient across the membrane. The alpha chain is a regulatory subunit. This is ATP synthase subunit alpha from Dehalococcoides mccartyi (strain ATCC BAA-2266 / KCTC 15142 / 195) (Dehalococcoides ethenogenes (strain 195)).